A 313-amino-acid polypeptide reads, in one-letter code: Peptidyl-prolyl cis-trans isomerase 9 (313 aa).

One can recognise a PPIase cyclophilin-type domain in the interval 9 to 174 (FLDMALDEKP…AKVRIFNSGE (166 aa)). 2 stretches are compositionally biased toward basic and acidic residues: residues 216–230 (EERESDFSSKTESSR) and 253–269 (RGDRNRRTQRADRKDDF). Disordered stretches follow at residues 216 to 274 (EERE…IAVR) and 288 to 313 (TPEHWRRNAPSKWQQGSYTHPVDLQP).

The protein belongs to the cyclophilin-type PPIase family.

The catalysed reaction is [protein]-peptidylproline (omega=180) = [protein]-peptidylproline (omega=0). In terms of biological role, PPIases accelerate the folding of proteins. It catalyzes the cis-trans isomerization of proline imid ic peptide bonds in oligopeptides. Thought to function as a catalyst in the folding and modification of cuticle collagens. This is Peptidyl-prolyl cis-trans isomerase 9 from Caenorhabditis briggsae.